The following is a 1228-amino-acid chain: Structural maintenance of chromosomes protein 1 (1228 aa).

32–39 is a binding site for ATP; it reads GPNGAGKS. A coiled-coil region spans residues 197–510; sequence NKKRGINAEL…ESKQDAKKRE (314 aa). Residues 522-635 form the SMC hinge domain; that stretch reads VKGRIIDLCT…CDSMTVARDL (114 aa). Coiled coils occupy residues 710 to 783, 814 to 926, and 984 to 1068; these read KLHS…KIFS, EFTK…EIDR, and VEVD…KRLQ.

This sequence belongs to the SMC family. SMC1 subfamily. Cohesin complexes are composed of the psm1/smc1 and psm3/smc3 heterodimer attached via their SMC hinge domain, rad21/scc1 which link them, and psc3/scc3, which interacts with rad21.

The protein resides in the nucleus. It is found in the chromosome. In terms of biological role, involved in chromosome cohesion during cell cycle and in DNA repair. Central component of cohesin complex. The cohesin complex is required for the cohesion of sister chromatids after DNA replication. The cohesin complex apparently forms a large proteinaceous ring within which sister chromatids can be trapped. At anaphase, the complex is cleaved and dissociates from chromatin, allowing sister chromatids to segregate. This Schizosaccharomyces pombe (strain 972 / ATCC 24843) (Fission yeast) protein is Structural maintenance of chromosomes protein 1 (psm1).